The primary structure comprises 319 residues: L-lactate dehydrogenase 2 (319 aa).

NAD(+)-binding positions include Val-16, Asp-37, Lys-42, Tyr-68, and 82–83; that span reads GA. Substrate contacts are provided by Gln-85 and Arg-91. NAD(+)-binding positions include Ser-104, 121–123, and Ser-146; that span reads AAN. Residue 123-126 participates in substrate binding; that stretch reads NPVD. Residue 151–154 participates in substrate binding; sequence DSAR. His-178 serves as the catalytic Proton acceptor. Tyr-222 bears the Phosphotyrosine mark. Residue Thr-231 coordinates substrate.

Belongs to the LDH/MDH superfamily. LDH family. In terms of assembly, homotetramer.

Its subcellular location is the cytoplasm. The enzyme catalyses (S)-lactate + NAD(+) = pyruvate + NADH + H(+). Its pathway is fermentation; pyruvate fermentation to lactate; (S)-lactate from pyruvate: step 1/1. Its function is as follows. Catalyzes the conversion of lactate to pyruvate (Potential). Contributes to S.aureus growth during nitrosative stress in both aerobically and anaerobically cultured cells, despite playing a secondary role in this resistance mechanism. This Staphylococcus aureus (strain USA300) protein is L-lactate dehydrogenase 2.